Consider the following 239-residue polypeptide: Pyridoxine 5'-phosphate synthase (239 aa).

Position 7 (Asn7) interacts with 3-amino-2-oxopropyl phosphate. 9 to 10 lines the 1-deoxy-D-xylulose 5-phosphate pocket; that stretch reads DH. Arg18 contacts 3-amino-2-oxopropyl phosphate. His43 serves as the catalytic Proton acceptor. 1-deoxy-D-xylulose 5-phosphate is bound by residues Arg45 and His50. Glu70 (proton acceptor) is an active-site residue. Thr100 is a 1-deoxy-D-xylulose 5-phosphate binding site. His191 acts as the Proton donor in catalysis. 3-amino-2-oxopropyl phosphate contacts are provided by residues Gly192 and 213-214; that span reads GH.

The protein belongs to the PNP synthase family. In terms of assembly, homooctamer; tetramer of dimers.

Its subcellular location is the cytoplasm. It catalyses the reaction 3-amino-2-oxopropyl phosphate + 1-deoxy-D-xylulose 5-phosphate = pyridoxine 5'-phosphate + phosphate + 2 H2O + H(+). It functions in the pathway cofactor biosynthesis; pyridoxine 5'-phosphate biosynthesis; pyridoxine 5'-phosphate from D-erythrose 4-phosphate: step 5/5. Functionally, catalyzes the complicated ring closure reaction between the two acyclic compounds 1-deoxy-D-xylulose-5-phosphate (DXP) and 3-amino-2-oxopropyl phosphate (1-amino-acetone-3-phosphate or AAP) to form pyridoxine 5'-phosphate (PNP) and inorganic phosphate. The protein is Pyridoxine 5'-phosphate synthase of Pelobacter propionicus (strain DSM 2379 / NBRC 103807 / OttBd1).